Here is a 199-residue protein sequence, read N- to C-terminus: NAD(P)H dehydrogenase (quinone) (199 aa).

In terms of domain architecture, Flavodoxin-like spans Val4–Val190. FMN contacts are provided by residues Ser10–Leu15 and Thr78–Phe80. Residue Tyr12 participates in NAD(+) binding. Trp98 is a binding site for substrate. Residues Ser113 to Gly119 and His134 contribute to the FMN site.

The protein belongs to the WrbA family. Requires FMN as cofactor.

It carries out the reaction a quinone + NADH + H(+) = a quinol + NAD(+). The enzyme catalyses a quinone + NADPH + H(+) = a quinol + NADP(+). The sequence is that of NAD(P)H dehydrogenase (quinone) from Azorhizobium caulinodans (strain ATCC 43989 / DSM 5975 / JCM 20966 / LMG 6465 / NBRC 14845 / NCIMB 13405 / ORS 571).